A 300-amino-acid chain; its full sequence is Bifunctional protein FolD (300 aa).

Residues 169–171 (GRG), serine 196, and isoleucine 237 contribute to the NADP(+) site.

The protein belongs to the tetrahydrofolate dehydrogenase/cyclohydrolase family. As to quaternary structure, homodimer.

It catalyses the reaction (6R)-5,10-methylene-5,6,7,8-tetrahydrofolate + NADP(+) = (6R)-5,10-methenyltetrahydrofolate + NADPH. The enzyme catalyses (6R)-5,10-methenyltetrahydrofolate + H2O = (6R)-10-formyltetrahydrofolate + H(+). Its pathway is one-carbon metabolism; tetrahydrofolate interconversion. Catalyzes the oxidation of 5,10-methylenetetrahydrofolate to 5,10-methenyltetrahydrofolate and then the hydrolysis of 5,10-methenyltetrahydrofolate to 10-formyltetrahydrofolate. The chain is Bifunctional protein FolD from Clavibacter sepedonicus (Clavibacter michiganensis subsp. sepedonicus).